The chain runs to 362 residues: Lipoprotein p35 (362 aa).

An N-terminal signal peptide occupies residues 1-30 (MKIKKIKLLKALALTGAFGIVATVPVIVSS). A lipid anchor (N-palmitoyl cysteine) is attached at Cys-31. Cys-31 carries the S-diacylglycerol cysteine lipid modification. Residues 33 to 53 (STSENNGNGNGNGGTDGNTQQ) are disordered.

This sequence belongs to the p35 lipoprotein family. In terms of processing, the N-terminus is blocked.

It is found in the cell membrane. Major M.penetrans antigen. The chain is Lipoprotein p35 from Malacoplasma penetrans (Mycoplasma penetrans).